A 441-amino-acid chain; its full sequence is tRNA modification GTPase MnmE (441 aa).

The (6S)-5-formyl-5,6,7,8-tetrahydrofolate site is built by Arg-21, Glu-79, and Lys-118. In terms of domain architecture, TrmE-type G spans 214-367 (GIHITILGAP…LVAELARVVE (154 aa)). Residues 224–229 (NAGKSS), 243–249 (SAQAGTT), and 268–271 (DTAG) each bind GTP. Mg(2+) contacts are provided by Ser-228 and Thr-249. Lys-441 is a (6S)-5-formyl-5,6,7,8-tetrahydrofolate binding site.

This sequence belongs to the TRAFAC class TrmE-Era-EngA-EngB-Septin-like GTPase superfamily. TrmE GTPase family. In terms of assembly, homodimer. Heterotetramer of two MnmE and two MnmG subunits. Requires K(+) as cofactor.

The protein localises to the cytoplasm. In terms of biological role, exhibits a very high intrinsic GTPase hydrolysis rate. Involved in the addition of a carboxymethylaminomethyl (cmnm) group at the wobble position (U34) of certain tRNAs, forming tRNA-cmnm(5)s(2)U34. The sequence is that of tRNA modification GTPase MnmE from Paramagnetospirillum magneticum (strain ATCC 700264 / AMB-1) (Magnetospirillum magneticum).